The following is a 471-amino-acid chain: DENN domain-containing protein 2D (471 aa).

The uDENN domain maps to 55-204 (EYLLVVSLKK…AFPAPGKTVT (150 aa)). A cDENN domain is found at 226–359 (HLEHVDFSSL…LQDDILDSLG (134 aa)). The dDENN domain maps to 361 to 445 (GINELKTAEQ…QEAEKSKNPP (85 aa)).

As to expression, in bronchial mucosa, mainly expressed in ciliated and basal epithelial cells and weakly in alveolar cells (at protein level). Tends to be down-regulated in lung cancers, immortalized bronchial epithelial cell lines and precancerous lesions.

The protein localises to the cytoplasm. In terms of biological role, guanine nucleotide exchange factor (GEF) which may activate RAB9A and RAB9B. Promotes the exchange of GDP to GTP, converting inactive GDP-bound Rab proteins into their active GTP-bound form. This Homo sapiens (Human) protein is DENN domain-containing protein 2D (DENND2D).